Reading from the N-terminus, the 373-residue chain is 3 beta-hydroxysteroid dehydrogenase/Delta 5--&gt;4-isomerase (373 aa).

Residue Tyr155 is the Proton acceptor of the active site. Lys159 is an NAD(+) binding site. The helical transmembrane segment at 288–308 threads the bilayer; it reads ISLQYWLAFLLEIVSFLLSPI.

The protein belongs to the 3-beta-HSD family.

The protein localises to the endoplasmic reticulum membrane. Its subcellular location is the mitochondrion membrane. It catalyses the reaction a 3beta-hydroxy-Delta(5)-steroid + NAD(+) = a 3-oxo-Delta(5)-steroid + NADH + H(+). The enzyme catalyses a 3-oxo-Delta(5)-steroid = a 3-oxo-Delta(4)-steroid. Its pathway is lipid metabolism; steroid biosynthesis. In terms of biological role, 3-beta-HSD is a bifunctional enzyme, that catalyzes the oxidative conversion of Delta(5)-ene-3-beta-hydroxy steroid, and the oxidative conversion of ketosteroids. The 3-beta-HSD enzymatic system plays a crucial role in the biosynthesis of all classes of hormonal steroids. The sequence is that of 3 beta-hydroxysteroid dehydrogenase/Delta 5--&gt;4-isomerase (HSD3B) from Bos taurus (Bovine).